The chain runs to 409 residues: Arginine deiminase (409 aa).

The active-site Amidino-cysteine intermediate is the cysteine 399.

The protein belongs to the arginine deiminase family.

The protein localises to the cytoplasm. The enzyme catalyses L-arginine + H2O = L-citrulline + NH4(+). It functions in the pathway amino-acid degradation; L-arginine degradation via ADI pathway; carbamoyl phosphate from L-arginine: step 1/2. In Borrelia recurrentis (strain A1), this protein is Arginine deiminase.